We begin with the raw amino-acid sequence, 461 residues long: Photosystem II CP43 reaction center protein (461 aa).

The propeptide occupies 1 to 2 (ME). Position 3 is an N-acetylthreonine (Thr3). Thr3 bears the Phosphothreonine mark. Transmembrane regions (helical) follow at residues 57–81 (LFEVAHFVPEKPMYEQGLILLPHLA), 122–143 (LLGPETLEESFPFFGYVWKDRN), 166–188 (KALYFGGVYDTWAPGGGDVRKIT), 243–263 (KPFAWARRALVWSGEAYLSYS), and 279–300 (WFNNTAYPSEFYGPTGPEASQA). Glu355 is a binding site for [CaMn4O5] cluster. A helical membrane pass occupies residues 435–459 (RARAAAAGFEKGIDRDFEPVLSMTP).

Belongs to the PsbB/PsbC family. PsbC subfamily. PSII is composed of 1 copy each of membrane proteins PsbA, PsbB, PsbC, PsbD, PsbE, PsbF, PsbH, PsbI, PsbJ, PsbK, PsbL, PsbM, PsbT, PsbX, PsbY, PsbZ, Psb30/Ycf12, at least 3 peripheral proteins of the oxygen-evolving complex and a large number of cofactors. It forms dimeric complexes. The cofactor is Binds multiple chlorophylls and provides some of the ligands for the Ca-4Mn-5O cluster of the oxygen-evolving complex. It may also provide a ligand for a Cl- that is required for oxygen evolution. PSII binds additional chlorophylls, carotenoids and specific lipids..

Its subcellular location is the plastid. The protein localises to the chloroplast thylakoid membrane. Functionally, one of the components of the core complex of photosystem II (PSII). It binds chlorophyll and helps catalyze the primary light-induced photochemical processes of PSII. PSII is a light-driven water:plastoquinone oxidoreductase, using light energy to abstract electrons from H(2)O, generating O(2) and a proton gradient subsequently used for ATP formation. The protein is Photosystem II CP43 reaction center protein of Gossypium barbadense (Sea Island cotton).